Here is a 401-residue protein sequence, read N- to C-terminus: 8-amino-7-oxononanoate synthase (401 aa).

Arginine 24 provides a ligand contact to substrate. Position 111 to 112 (111 to 112) interacts with pyridoxal 5'-phosphate; it reads GF. Residue histidine 137 participates in substrate binding. Pyridoxal 5'-phosphate is bound by residues serine 183, histidine 211, and threonine 240. At lysine 243 the chain carries N6-(pyridoxal phosphate)lysine. Threonine 357 is a binding site for substrate.

Belongs to the class-II pyridoxal-phosphate-dependent aminotransferase family. BioF subfamily. Homodimer. Pyridoxal 5'-phosphate serves as cofactor.

It catalyses the reaction 6-carboxyhexanoyl-[ACP] + L-alanine + H(+) = (8S)-8-amino-7-oxononanoate + holo-[ACP] + CO2. The protein operates within cofactor biosynthesis; biotin biosynthesis. In terms of biological role, catalyzes the decarboxylative condensation of pimeloyl-[acyl-carrier protein] and L-alanine to produce 8-amino-7-oxononanoate (AON), [acyl-carrier protein], and carbon dioxide. The sequence is that of 8-amino-7-oxononanoate synthase from Xanthomonas campestris pv. campestris (strain 8004).